The following is a 393-amino-acid chain: Argininosuccinate synthase (393 aa).

ATP is bound by residues 7–15 and A34; that span reads AYSGGLDTS. 2 residues coordinate L-citrulline: Y85 and S90. G115 is a binding site for ATP. T117, N121, and D122 together coordinate L-aspartate. N121 contributes to the L-citrulline binding site. L-citrulline-binding residues include R125, S176, S185, E261, and Y273.

It belongs to the argininosuccinate synthase family. Type 1 subfamily. Homotetramer.

The protein resides in the cytoplasm. The catalysed reaction is L-citrulline + L-aspartate + ATP = 2-(N(omega)-L-arginino)succinate + AMP + diphosphate + H(+). The protein operates within amino-acid biosynthesis; L-arginine biosynthesis; L-arginine from L-ornithine and carbamoyl phosphate: step 2/3. The sequence is that of Argininosuccinate synthase from Ehrlichia chaffeensis (strain ATCC CRL-10679 / Arkansas).